The following is a 530-amino-acid chain: Chaperone Ric-8A (530 aa).

A Phosphoserine modification is found at Ser-435. Phosphothreonine occurs at positions 440 and 442. Phosphoserine occurs at positions 501, 522, 523, and 527.

It belongs to the synembryn family. Interacts with GDP-bound G alpha proteins GNAI1, GNAO1 and GNAQ, and with GNA13 with lower affinity. Does not interact with G-alpha proteins when they are in complex with subunits beta and gamma. Interacts (via C-terminus) with RGS14; the interaction stimulates the dissociation of the complex between RGS14 and the active GTP-bound form of GNAI1. Interacts with NCS1; interaction is favored in the absence of Ca(2+) and myristoylation of NCS1 is not required. Post-translationally, phosphorylated at Ser-435 and Thr-440 by CK2, stabilizing its interface with G alpha proteins.

The protein resides in the cytoplasm. Its subcellular location is the cell cortex. Its function is as follows. Chaperone that specifically binds and folds nascent G alpha proteins prior to G protein heterotrimer formation, promoting their stability and activity: folds GNAI1, GNAO1, GNA13 and GNAQ. Does not fold G(s) G-alpha proteins GNAS nor GNAL. Also acts as a guanine nucleotide exchange factor (GEF) for G alpha proteins by stimulating exchange of bound GDP for free GTP. Involved in regulation of microtubule pulling forces during mitotic movement of chromosomes by stimulating G(i)-alpha protein (GNAI1), possibly leading to release G(i)-alpha-GTP and NuMA proteins from the NuMA-GPSM2-G(i)-alpha-GDP complex. Also acts as an activator for G(q)-alpha (GNAQ) protein by enhancing the G(q)-coupled receptor-mediated ERK activation. The chain is Chaperone Ric-8A (RIC8A) from Pongo abelii (Sumatran orangutan).